Reading from the N-terminus, the 554-residue chain is Polyamine aminopropyltransferase 2 (554 aa).

Residues 1-13 (MIEPHAPAPPGSP) show a composition bias toward pro residues. The segment at 1–20 (MIEPHAPAPPGSPPSWGGPC) is disordered. A run of 6 helical transmembrane segments spans residues 37–57 (FLVL…ELEL), 69–89 (VTQA…GSLA), 106–126 (AALA…FAWT), 139–159 (ILLV…VPLL), 184–204 (VGAL…LGQL), and 206–226 (GALL…LGLF). Positions 235 to 516 (RWLLLTANAV…RTAPAPRLDP (282 aa)) are spermidine synthase. The PABS domain maps to 247-492 (ALLATATVLA…SVPGPRRAAA (246 aa)). Gln-281 contacts S-methyl-5'-thioadenosine. Residues His-313 and Asp-335 each contribute to the spermidine site. Residues Glu-355 and 389-390 (DA) contribute to the S-methyl-5'-thioadenosine site. The Proton acceptor role is filled by Asp-408. The tract at residues 476-495 (DTGPGPGSVPGPRRAAAGPP) is disordered. Residues 485-495 (PGPRRAAAGPP) show a composition bias toward low complexity.

Belongs to the spermidine/spermine synthase family. As to quaternary structure, homodimer or homotetramer.

The protein localises to the cell membrane. It carries out the reaction S-adenosyl 3-(methylsulfanyl)propylamine + putrescine = S-methyl-5'-thioadenosine + spermidine + H(+). Its pathway is amine and polyamine biosynthesis; spermidine biosynthesis; spermidine from putrescine: step 1/1. Functionally, catalyzes the irreversible transfer of a propylamine group from the amino donor S-adenosylmethioninamine (decarboxy-AdoMet) to putrescine (1,4-diaminobutane) to yield spermidine. This Streptomyces coelicolor (strain ATCC BAA-471 / A3(2) / M145) protein is Polyamine aminopropyltransferase 2.